The chain runs to 384 residues: D-galactosamine-6-phosphate deaminase AgaS (384 aa).

2 SIS domains span residues 45-197 and 215-364; these read LEPL…SQTF and SEGV…PDTP.

It belongs to the SIS family. AgaS subfamily.

It catalyses the reaction D-galactosamine 6-phosphate + H2O = D-tagatopyranose 1-phosphate + NH4(+). In terms of biological role, catalyzes the isomerization-deamination of galactosamine 6-phosphate to form tagatofuranose 6-phosphate and ammonium ion. The chain is D-galactosamine-6-phosphate deaminase AgaS from Escherichia coli O157:H7.